A 391-amino-acid polypeptide reads, in one-letter code: 8-amino-7-oxononanoate synthase (391 aa).

R19 contributes to the substrate binding site. Residue 106 to 107 coordinates pyridoxal 5'-phosphate; sequence GY. H131 serves as a coordination point for substrate. The pyridoxal 5'-phosphate site is built by S178, H206, and T234. At K237 the chain carries N6-(pyridoxal phosphate)lysine. T353 is a substrate binding site.

Belongs to the class-II pyridoxal-phosphate-dependent aminotransferase family. BioF subfamily. In terms of assembly, homodimer. Pyridoxal 5'-phosphate is required as a cofactor.

The enzyme catalyses 6-carboxyhexanoyl-[ACP] + L-alanine + H(+) = (8S)-8-amino-7-oxononanoate + holo-[ACP] + CO2. The protein operates within cofactor biosynthesis; biotin biosynthesis. Its function is as follows. Catalyzes the decarboxylative condensation of pimeloyl-[acyl-carrier protein] and L-alanine to produce 8-amino-7-oxononanoate (AON), [acyl-carrier protein], and carbon dioxide. This is 8-amino-7-oxononanoate synthase from Pelobacter propionicus (strain DSM 2379 / NBRC 103807 / OttBd1).